A 456-amino-acid polypeptide reads, in one-letter code: Pantothenate kinase 2, mitochondrial (456 aa).

The interval 16–89 (AGRFGAPMER…TSAGRPRAEG (74 aa)) is disordered. 2 stretches are compositionally biased toward low complexity: residues 28-39 (RAAATSAAVGES) and 55-65 (SSAAPSGSGEA). A phosphoserine mark is found at Ser55, Ser56, and Ser75. Positions 154–161 (LELKDLTL) match the Nuclear export signal motif. Glu224 serves as the catalytic Proton acceptor. The acetyl-CoA site is built by Ser278, Ser281, and Arg293.

This sequence belongs to the type II pantothenate kinase family. As to quaternary structure, homodimer.

It localises to the cytoplasm. Its subcellular location is the cytosol. It carries out the reaction (R)-pantothenate + ATP = (R)-4'-phosphopantothenate + ADP + H(+). The protein operates within cofactor biosynthesis; coenzyme A biosynthesis; CoA from (R)-pantothenate: step 1/5. With respect to regulation, inhibited by acetyl-CoA. Inhibited by calcium hopantenate. Activated by palmitoylcarnitine. Catalyzes the phosphorylation of pantothenate to generate 4'-phosphopantothenate in the first and rate-determining step of coenzyme A (CoA) synthesis. In Mus musculus (Mouse), this protein is Pantothenate kinase 2, mitochondrial (Pank2).